Here is a 791-residue protein sequence, read N- to C-terminus: 1-phosphatidylinositol 4,5-bisphosphate phosphodiesterase delta-4 (791 aa).

Positions 16 to 124 constitute a PH domain; the sequence is LLMQKGTMMR…WMQGLQLLVG (109 aa). A substrate binding region spans residues 26–53; the sequence is KVRSKSWKKLRFFRLQDDGMTVWHARQA. EF-hand domains follow at residues 134-169, 170-205, and 207-237; these read RLDQ…MNVE, MDQE…LTQR, and EVQE…EQKE. The Ca(2+) site is built by aspartate 147, asparagine 149, aspartate 151, arginine 153, glutamate 158, aspartate 183, serine 185, serine 187, threonine 189, and glutamate 194. A GBA motif is present at residues 213-243; it reads EKFSSDGQKLTLLEFVDFLQEEQKEGERASD. Residues 290–435 form the PI-PLC X-box domain; that stretch reads QDMTQPLNHY…LRGKILVKGK (146 aa). Histidine 305 is an active-site residue. Ca(2+)-binding residues include asparagine 306, glutamate 335, and aspartate 337. Residue histidine 350 is part of the active site. Glutamate 384 serves as a coordination point for Ca(2+). Lysine 433, lysine 435, serine 551, and arginine 578 together coordinate substrate. Residues 522–638 enclose the PI-PLC Y-box domain; that stretch reads LSALVVYLKA…GYVLKPDFLR (117 aa). The 128-residue stretch at 638–765 folds into the C2 domain; that stretch reads RDAQSSFHPE…QGYRHIHLLS (128 aa). 6 residues coordinate Ca(2+): isoleucine 679, aspartate 681, asparagine 705, aspartate 734, tyrosine 735, and aspartate 736. The PDZ-binding motif lies at 760 to 763; the sequence is HIHL.

In terms of assembly, interacts with GRIP1. Interacts (via GBA motif) with guanine nucleotide-binding protein G(i) alpha subunit GNAI3 (inactive GDP-bound form); low-affinity interaction. It depends on Ca(2+) as a cofactor.

It localises to the membrane. It is found in the nucleus. Its subcellular location is the cytoplasm. The protein localises to the endoplasmic reticulum. The catalysed reaction is a 1,2-diacyl-sn-glycero-3-phospho-(1D-myo-inositol-4,5-bisphosphate) + H2O = 1D-myo-inositol 1,4,5-trisphosphate + a 1,2-diacyl-sn-glycerol + H(+). It carries out the reaction a 1,2-diacyl-sn-glycero-3-phospho-(1D-myo-inositol) + H2O = 1D-myo-inositol 1-phosphate + a 1,2-diacyl-sn-glycerol + H(+). Its function is as follows. Hydrolyzes the phosphatidylinositol 4,5-bisphosphate (PIP2) to generate 2 second messenger molecules diacylglycerol (DAG) and inositol 1,4,5-trisphosphate (IP3). DAG mediates the activation of protein kinase C (PKC), while IP3 releases Ca(2+) from intracellular stores. Required for acrosome reaction in sperm during fertilization, probably by acting as an important enzyme for intracellular Ca(2+) mobilization in the zona pellucida-induced acrosome reaction. May play a role in cell growth. Modulates the liver regeneration in cooperation with nuclear PKC. Overexpression up-regulates the Erk signaling pathway and proliferation. This chain is 1-phosphatidylinositol 4,5-bisphosphate phosphodiesterase delta-4 (PLCD4), found in Bos taurus (Bovine).